The primary structure comprises 241 residues: ATP synthase subunit a (241 aa).

The next 5 helical transmembrane spans lie at G30 to G50, F91 to W111, I128 to S148, L193 to L213, and G214 to G234.

It belongs to the ATPase A chain family. In terms of assembly, F-type ATPases have 2 components, CF(1) - the catalytic core - and CF(0) - the membrane proton channel. CF(1) has five subunits: alpha(3), beta(3), gamma(1), delta(1), epsilon(1). CF(0) has four main subunits: a, b, b' and c.

It is found in the cellular thylakoid membrane. Key component of the proton channel; it plays a direct role in the translocation of protons across the membrane. This Prochlorococcus marinus (strain MIT 9313) protein is ATP synthase subunit a.